Reading from the N-terminus, the 340-residue chain is Quinic acid degradation cluster protein x (340 aa).

Mg(2+) contacts are provided by Glu-90, Asp-115, Leu-117, Asp-118, and Asp-262. Residue Glu-90 coordinates substrate. Substrate contacts are provided by residues 117–120 (LDGT) and Asp-262.

It belongs to the inositol monophosphatase superfamily.

Functionally, part of the qa gene cluster that mediates the catabolism of quinic acid (QA) and as such, allows the use of QA as a sole carbon source. Its function within the pathway has not been determined yet but it probably plays a regulatory role. The qa cluster encodes 3 inducible enymes (qa-2, qa-3 and qa-4) catalyzing the first three reactions in the catabolism of quinic acid to protocatechuic acid (also known as 3,4-Dihydroxybenzoic acid). The chain is Quinic acid degradation cluster protein x from Neurospora crassa (strain ATCC 24698 / 74-OR23-1A / CBS 708.71 / DSM 1257 / FGSC 987).